We begin with the raw amino-acid sequence, 122 residues long: Insulin-like 3 (122 aa).

Residues 1–15 (MRAPLLLMLLALGSA) form the signal peptide. Disulfide bonds link C29-C107, C41-C120, and C106-C111.

The protein belongs to the insulin family. As to quaternary structure, heterodimer of a B chain and an A chain linked by two disulfide bonds. In terms of tissue distribution, expressed exclusively in Leydig cells of the testis.

It localises to the secreted. Functionally, seems to play a role in testicular function. May be a trophic hormone with a role in testicular descent in fetal life. Is a ligand for LGR8 receptor. This Mus musculus (Mouse) protein is Insulin-like 3 (Insl3).